Reading from the N-terminus, the 190-residue chain is Apolipoprotein M (190 aa).

Residues 1 to 22 (MFHQVWAALLSLYGLLFNSMNQ) constitute a signal peptide (not cleaved). 3 disulfides stabilise this stretch: Cys23-Cys169, Cys95-Cys185, and Cys130-Cys159. Positions 138 and 145 each coordinate tetradecanoate.

Belongs to the calycin superfamily. Lipocalin family. Highly divergent. Interacts with LRP2; LRP2 mediates APOM renal uptake and subsequent lysosomal degradation. As to expression, expressed by the liver; secreted in plasma.

The protein localises to the secreted. Its function is as follows. Probably involved in lipid transport. Can bind sphingosine-1-phosphate, myristic acid, palmitic acid and stearic acid, retinol, all-trans-retinoic acid and 9-cis-retinoic acid. The chain is Apolipoprotein M (Apom) from Mus musculus (Mouse).